The sequence spans 217 residues: Oxygen regulatory protein NreC (217 aa).

Residues 2–119 (KIVIADDHAV…QLLLAVRTVY (118 aa)) enclose the Response regulatory domain. Asp-53 bears the 4-aspartylphosphate mark. One can recognise an HTH luxR-type domain in the interval 148 to 213 (TNDPFKILSK…ELVEYALKKK (66 aa)). The H-T-H motif DNA-binding region spans 172–191 (NKDIAEKLFVSVKTVEAHKT).

In terms of processing, phosphorylated by NreB.

The protein resides in the cytoplasm. Functionally, member of the two-component regulatory system NreB/NreC involved in the control of dissimilatory nitrate/nitrite reduction in response to oxygen. Phosphorylated NreC binds to a GC-rich palindromic sequence at the promoters of the nitrate (narGHJI) and nitrite (nir) reductase operons, as well as the putative nitrate transporter gene narT, and activates their expression. This is Oxygen regulatory protein NreC (nreC) from Staphylococcus haemolyticus (strain JCSC1435).